An 832-amino-acid chain; its full sequence is MRVRGMQRNWQHLGKWGLLFLGILIICNAADNLWVTVYYGVPVWKEATTTLFCASDAKAYEREAHNVWATHACVPTDPNPQEVFLKNVTENFDMWKNNMVEQMHTDIISLWDQSLKPCVKLTPLCVTLNCTNATNNSQEKPGAMQNCSFNMTTEVRDKKLKLSALFYRLDIVPIGNNNSSEYRLINCNTSTITQACPKVSWDPIPIHYCAPAGYAILKCNDKRFNGTGPCKNVSTVQCTHGIKPVVSTQLLLNGSLAEEGIVIRSQNISNNAKTIIVHLNESVQINCTRPNNNTRKGIHLGPGQTFYATGAIIGDIRKAHCNISGTQWNNTLEYVKAELKSHFPNNTAIKFNQSSGGDLEITMHSFNCRGEFFYCDTSGLFNDTGSNNGTITLPCRIKQIVNMWQGVGRAMYTSPIAGNITCNSNITGLLLTRDGGNESNIETFRPEGGNMKDNWRSELYKYKVVEIEPLGVAPTKAKRQVVQREKRAAGLGALFLGFLGDSREHMGAASITLTVQARQLLSGIVQQQNNLLRAIEAQQHLLQLTVWGIKQLQARVLAVERYLKDQQLLGIWGCSGKLICTTNVPWNSSWSNKSQEEIWNNMTWMEWEKEISNYSNIIYKLIEESQNQQEKNEQELLALDKWASLWNWFDISNWLWYIKIFIMIVGGLIGLRIVFAVLSIVNRVRKGYSPLSLQTLIPSPRGPDRPEGIEEGGGEQGKDRSVRLVTGFLALAWDDLRNLCLFSYRHLRDFILIAARIVDRGLRRGWEALKYLGNLTRYWSQELKNSAISLFNTTAIVVAEGTDRIIEVLQRAGRAVLNIPRRIRQGAERALL.

The signal sequence occupies residues 1–31 (MRVRGMQRNWQHLGKWGLLFLGILIICNAAD). Over 32–660 (NLWVTVYYGV…ISNWLWYIKI (629 aa)) the chain is Extracellular. Cysteines 53 and 73 form a disulfide. 20 N-linked (GlcNAc...) asparagine; by host glycosylation sites follow: Asn87, Asn129, Asn132, Asn135, Asn146, Asn150, Asn177, Asn178, Asn188, Asn225, Asn232, Asn253, Asn267, Asn280, Asn286, Asn292, Asn322, Asn329, Asn345, and Asn352. 5 cysteine pairs are disulfide-bonded: Cys118–Cys196, Cys125–Cys187, Cys130–Cys147, Cys209–Cys238, and Cys219–Cys230. The segment at 130-146 (CTNATNNSQEKPGAMQN) is V1. The interval 147 to 187 (CSFNMTTEVRDKKLKLSALFYRLDIVPIGNNNSSEYRLINC) is V2. Positions 287 to 320 (CTRPNNNTRKGIHLGPGQTFYATGAIIGDIRKAH) are V3. Cys287 and Cys321 are joined by a disulfide. The segment at 354–364 (SSGGDLEITMH) is CD4-binding loop. Intrachain disulfides connect Cys368–Cys422 and Cys375–Cys395. The V4 stretch occupies residues 375–395 (CDTSGLFNDTGSNNGTITLPC). N-linked (GlcNAc...) asparagine; by host glycans are attached at residues Asn382, Asn388, Asn419, Asn425, and Asn437. The segment at 438–447 (ESNIETFRPE) is V5. The segment at 488–508 (AAGLGALFLGFLGDSREHMGA) is fusion peptide. The segment at 550 to 568 (KQLQARVLAVERYLKDQQL) is immunosuppression. Cysteines 574 and 580 form a disulfide. Asn587, Asn592, Asn601, and Asn613 each carry an N-linked (GlcNAc...) asparagine; by host glycan. Positions 609 to 643 (KEISNYSNIIYKLIEESQNQQEKNEQELLALDKWA) form a coiled coil. The interval 638-659 (ALDKWASLWNWFDISNWLWYIK) is MPER; binding to GalCer. Residues 661-681 (FIMIVGGLIGLRIVFAVLSIV) traverse the membrane as a helical segment. The Cytoplasmic portion of the chain corresponds to 682 to 832 (NRVRKGYSPL…IRQGAERALL (151 aa)). Residues 688–691 (YSPL) carry the YXXL motif; contains endocytosis signal motif. The tract at residues 695 to 717 (TLIPSPRGPDRPEGIEEGGGEQG) is disordered. Residue Cys740 is the site of S-palmitoyl cysteine; by host attachment. The short motif at 831-832 (LL) is the Di-leucine internalization motif element.

This sequence belongs to the HIV-1 env protein family. As to quaternary structure, the mature envelope protein (Env) consists of a homotrimer of non-covalently associated gp120-gp41 heterodimers. The resulting complex protrudes from the virus surface as a spike. There seems to be as few as 10 spikes on the average virion. Interacts with host CD4, CCR5 and CXCR4. Gp120 also interacts with the C-type lectins CD209/DC-SIGN and CLEC4M/DC-SIGNR (collectively referred to as DC-SIGN(R)). Gp120 and gp41 interact with GalCer. Gp120 interacts with host ITGA4/ITGB7 complex; on CD4+ T-cells, this interaction results in rapid activation of integrin ITGAL/LFA-1, which facilitates efficient cell-to-cell spreading of HIV-1. Gp120 interacts with cell-associated heparan sulfate; this interaction increases virus infectivity on permissive cells and may be involved in infection of CD4- cells. The mature envelope protein (Env) consists of a homotrimer of non-covalently associated gp120-gp41 heterodimers. The resulting complex protrudes from the virus surface as a spike. There seems to be as few as 10 spikes on the average virion. Highly glycosylated by host. The high number of glycan on the protein is reffered to as 'glycan shield' because it contributes to hide protein sequence from adaptive immune system. In terms of processing, palmitoylation of the transmembrane protein and of Env polyprotein (prior to its proteolytic cleavage) is essential for their association with host cell membrane lipid rafts. Palmitoylation is therefore required for envelope trafficking to classical lipid rafts, but not for viral replication. Post-translationally, specific enzymatic cleavages in vivo yield mature proteins. Envelope glycoproteins are synthesized as an inactive precursor that is heavily N-glycosylated and processed likely by host cell furin in the Golgi to yield the mature SU and TM proteins. The cleavage site between SU and TM requires the minimal sequence [KR]-X-[KR]-R. About 2 of the 9 disulfide bonds of gp41 are reduced by P4HB/PDI, following binding to CD4 receptor.

It localises to the virion membrane. Its subcellular location is the host cell membrane. The protein localises to the host endosome membrane. Oligomerizes in the host endoplasmic reticulum into predominantly trimers. In a second time, gp160 transits in the host Golgi, where glycosylation is completed. The precursor is then proteolytically cleaved in the trans-Golgi and thereby activated by cellular furin or furin-like proteases to produce gp120 and gp41. In terms of biological role, attaches the virus to the host lymphoid cell by binding to the primary receptor CD4. This interaction induces a structural rearrangement creating a high affinity binding site for a chemokine coreceptor like CXCR4 and/or CCR5. Acts as a ligand for CD209/DC-SIGN and CLEC4M/DC-SIGNR, which are respectively found on dendritic cells (DCs), and on endothelial cells of liver sinusoids and lymph node sinuses. These interactions allow capture of viral particles at mucosal surfaces by these cells and subsequent transmission to permissive cells. HIV subverts the migration properties of dendritic cells to gain access to CD4+ T-cells in lymph nodes. Virus transmission to permissive T-cells occurs either in trans (without DCs infection, through viral capture and transmission), or in cis (following DCs productive infection, through the usual CD4-gp120 interaction), thereby inducing a robust infection. In trans infection, bound virions remain infectious over days and it is proposed that they are not degraded, but protected in non-lysosomal acidic organelles within the DCs close to the cell membrane thus contributing to the viral infectious potential during DCs' migration from the periphery to the lymphoid tissues. On arrival at lymphoid tissues, intact virions recycle back to DCs' cell surface allowing virus transmission to CD4+ T-cells. Functionally, acts as a class I viral fusion protein. Under the current model, the protein has at least 3 conformational states: pre-fusion native state, pre-hairpin intermediate state, and post-fusion hairpin state. During fusion of viral and target intracellular membranes, the coiled coil regions (heptad repeats) assume a trimer-of-hairpins structure, positioning the fusion peptide in close proximity to the C-terminal region of the ectodomain. The formation of this structure appears to drive apposition and subsequent fusion of viral and target cell membranes. Complete fusion occurs in host cell endosomes and is dynamin-dependent, however some lipid transfer might occur at the plasma membrane. The virus undergoes clathrin-dependent internalization long before endosomal fusion, thus minimizing the surface exposure of conserved viral epitopes during fusion and reducing the efficacy of inhibitors targeting these epitopes. Membranes fusion leads to delivery of the nucleocapsid into the cytoplasm. This is Envelope glycoprotein gp160 from Human immunodeficiency virus type 1 group M subtype F1 (isolate VI850) (HIV-1).